Reading from the N-terminus, the 265-residue chain is Putative hydro-lyase Teth514_1597 (265 aa).

It belongs to the D-glutamate cyclase family.

The chain is Putative hydro-lyase Teth514_1597 from Thermoanaerobacter sp. (strain X514).